Reading from the N-terminus, the 196-residue chain is MPIGVPKVPFRSPGEEDASWVDVYNRLYRERLLFLGQAVDSEISNQLIGLMIYLSIEDDTKDLYLFINSPGGWVIPGVAIYDTMQFVRPDVHTICMGLAASMGSFILVGGEITKRLAFPHARVMIHQPASSFYEAQAGEFILEAEELLKLRETLTRVYVQRTGKPLWVVSEDMERDVFMSATEAQAYGIVDLVAVE.

Ser-101 serves as the catalytic Nucleophile. Residue His-126 is part of the active site.

It belongs to the peptidase S14 family. As to quaternary structure, component of the chloroplastic Clp protease core complex.

Its subcellular location is the plastid. The protein localises to the chloroplast stroma. The enzyme catalyses Hydrolysis of proteins to small peptides in the presence of ATP and magnesium. alpha-casein is the usual test substrate. In the absence of ATP, only oligopeptides shorter than five residues are hydrolyzed (such as succinyl-Leu-Tyr-|-NHMec, and Leu-Tyr-Leu-|-Tyr-Trp, in which cleavage of the -Tyr-|-Leu- and -Tyr-|-Trp bonds also occurs).. In terms of biological role, cleaves peptides in various proteins in a process that requires ATP hydrolysis. Has a chymotrypsin-like activity. Plays a major role in the degradation of misfolded proteins. This Coffea arabica (Arabian coffee) protein is ATP-dependent Clp protease proteolytic subunit.